The chain runs to 243 residues: Isoprenyl transferase 2 (243 aa).

Asp-23 is an active-site residue. Mg(2+) is bound at residue Asp-23. Residues 24-27 (GNGR), Trp-28, Arg-36, His-40, and 68-70 (STE) contribute to the substrate site. Residue Asn-71 is the Proton acceptor of the active site. Residues Trp-72, Arg-74, Arg-191, and 197–199 (RTS) each bind substrate. Glu-210 contacts Mg(2+).

The protein belongs to the UPP synthase family. In terms of assembly, homodimer. Requires Mg(2+) as cofactor.

Catalyzes the condensation of isopentenyl diphosphate (IPP) with allylic pyrophosphates generating different type of terpenoids. The chain is Isoprenyl transferase 2 from Corynebacterium glutamicum (strain ATCC 13032 / DSM 20300 / JCM 1318 / BCRC 11384 / CCUG 27702 / LMG 3730 / NBRC 12168 / NCIMB 10025 / NRRL B-2784 / 534).